The chain runs to 467 residues: tRNA modification GTPase MnmE (467 aa).

(6S)-5-formyl-5,6,7,8-tetrahydrofolate is bound by residues Arg-27, Glu-89, and Arg-128. The 163-residue stretch at 225–387 (GISMVIAGRP…LKQAIFTVVT (163 aa)) folds into the TrmE-type G domain. Asn-235 lines the K(+) pocket. GTP contacts are provided by residues 235–240 (NVGKSS), 254–260 (TSIAGTT), 279–282 (DTAG), and 368–370 (SAR). Ser-239 contacts Mg(2+). Positions 254, 256, and 259 each coordinate K(+). Thr-260 serves as a coordination point for Mg(2+). Lys-467 is a binding site for (6S)-5-formyl-5,6,7,8-tetrahydrofolate.

This sequence belongs to the TRAFAC class TrmE-Era-EngA-EngB-Septin-like GTPase superfamily. TrmE GTPase family. In terms of assembly, homodimer. Heterotetramer of two MnmE and two MnmG subunits. The cofactor is K(+).

It localises to the cytoplasm. Exhibits a very high intrinsic GTPase hydrolysis rate. Involved in the addition of a carboxymethylaminomethyl (cmnm) group at the wobble position (U34) of certain tRNAs, forming tRNA-cmnm(5)s(2)U34. This Desulfotalea psychrophila (strain LSv54 / DSM 12343) protein is tRNA modification GTPase MnmE.